A 461-amino-acid chain; its full sequence is Tip elongation protein 1 (461 aa).

Positions Gly22 to Pro69 constitute a CAP-Gly domain. Phosphoserine occurs at positions 82, 84, 289, 294, and 305. Residues Thr134 to Glu418 are a coiled coil. The span at Lys278–Phe303 shows a compositional bias: polar residues. A disordered region spans residues Lys278 to Arg323. Thr367 bears the Phosphothreonine mark. The tract at residues Leu417 to Trp437 is disordered.

In terms of assembly, monomer. Interacts with tea1 and tea2. Interacts with tea4 in the presence of tea1.

Its subcellular location is the cytoplasm. The protein localises to the cytoskeleton. Functionally, has a role in stabilizing and targeting the growing tips of the microtubules along the long axis of the cell, directing them to the ends of the cell. Acts as a cargo for tea2. The protein is Tip elongation protein 1 (tip1) of Schizosaccharomyces pombe (strain 972 / ATCC 24843) (Fission yeast).